We begin with the raw amino-acid sequence, 391 residues long: Heme A synthase (391 aa).

A run of 8 helical transmembrane segments spans residues 37–57, 121–141, 152–172, 186–206, 229–249, 298–318, 332–352, and 354–374; these read IRLW…VGGL, RQLG…FLVA, LLAL…MVAS, LAVH…QALL, TTVL…VAGI, FLHR…WIFG, LLAL…LSAA, and WQVA…ILHA. Residue H300 coordinates heme. H360 is a heme binding site.

The protein belongs to the COX15/CtaA family. Type 2 subfamily. In terms of assembly, interacts with CtaB. Heme b serves as cofactor.

The protein resides in the cell membrane. The catalysed reaction is Fe(II)-heme o + 2 A + H2O = Fe(II)-heme a + 2 AH2. It functions in the pathway porphyrin-containing compound metabolism; heme A biosynthesis; heme A from heme O: step 1/1. Catalyzes the conversion of heme O to heme A by two successive hydroxylations of the methyl group at C8. The first hydroxylation forms heme I, the second hydroxylation results in an unstable dihydroxymethyl group, which spontaneously dehydrates, resulting in the formyl group of heme A. This chain is Heme A synthase, found in Cereibacter sphaeroides (strain ATCC 17025 / ATH 2.4.3) (Rhodobacter sphaeroides).